The sequence spans 287 residues: Rhodopsin (287 aa).

The Extracellular segment spans residues valine 1–alanine 5. Residues tyrosine 6–valine 30 form a helical membrane-spanning segment. Over threonine 31–asparagine 42 the chain is Cytoplasmic. Residues tyrosine 43–tyrosine 65 form a helical membrane-spanning segment. Topologically, residues threonine 66–cysteine 79 are extracellular. A disulfide bridge links cysteine 79 with cysteine 156. A helical transmembrane segment spans residues asparagine 80–valine 102. The 'Ionic lock' involved in activated form stabilization motif lies at glutamate 103 to tryptophan 105. Residues glutamate 103–histidine 121 lie on the Cytoplasmic side of the membrane. A helical membrane pass occupies residues alanine 122 to valine 142. Topologically, residues glycine 143–serine 171 are extracellular. Asparagine 169 carries an N-linked (GlcNAc...) asparagine glycan. The chain crosses the membrane as a helical span at residues leucine 172–glycine 193. Over arginine 194–arginine 221 the chain is Cytoplasmic. Residues methionine 222–tyrosine 243 traverse the membrane as a helical segment. At isoleucine 244–valine 255 the chain is on the extracellular side. The chain crosses the membrane as a helical span at residues phenylalanine 256–cysteine 277. Position 265 is an N6-(retinylidene)lysine (lysine 265). Residues methionine 278 to isoleucine 287 lie on the Cytoplasmic side of the membrane.

This sequence belongs to the G-protein coupled receptor 1 family. Opsin subfamily. Post-translationally, phosphorylated on some or all of the serine and threonine residues present in the C-terminal region. Contains one covalently linked retinal chromophore.

It is found in the membrane. Its subcellular location is the cell projection. The protein localises to the cilium. The protein resides in the photoreceptor outer segment. Photoreceptor required for image-forming vision at low light intensity. While most salt water fish species use retinal as chromophore, most freshwater fish use 3-dehydroretinal, or a mixture of retinal and 3-dehydroretinal. Light-induced isomerization of 11-cis to all-trans retinal triggers a conformational change that activates signaling via G-proteins. Subsequent receptor phosphorylation mediates displacement of the bound G-protein alpha subunit by arrestin and terminates signaling. This is Rhodopsin (rho) from Taurulus bubalis (Long-spined sea scorpion).